The following is a 331-amino-acid chain: Pectate lyase B (331 aa).

The first 25 residues, 1–25 (MKFTGSPLLWPSWLPLPAPPPPLPS), serve as a signal peptide directing secretion. Asn99 carries an N-linked (GlcNAc...) asparagine glycan. Residues Asp139, Asp169, and Asp173 each contribute to the Ca(2+) site. The active site involves Arg226.

It belongs to the polysaccharide lyase 1 family. It depends on Ca(2+) as a cofactor.

Its subcellular location is the secreted. The enzyme catalyses Eliminative cleavage of (1-&gt;4)-alpha-D-galacturonan to give oligosaccharides with 4-deoxy-alpha-D-galact-4-enuronosyl groups at their non-reducing ends.. The protein operates within glycan metabolism; pectin degradation; 2-dehydro-3-deoxy-D-gluconate from pectin: step 2/5. Its function is as follows. Acts as a virulence factor active in plant tissue maceration. The chain is Pectate lyase B (PLB) from Colletotrichum gloeosporioides (Anthracnose fungus).